The following is a 205-amino-acid chain: Golgi apparatus membrane protein TVP23 homolog B (205 aa).

Position 1 is an N-acetylmethionine (Met1). A compositionally biased stretch (acidic residues) spans 1–21; it reads MLSQDSNDDTEDVSLFDAEEE. Positions 1–27 are disordered; it reads MLSQDSNDDTEDVSLFDAEEETTNRPR. 4 consecutive transmembrane segments (helical) span residues 34–53, 54–72, 126–146, and 152–172; these read PVAS…VYLL, CELL…ILLL, IFWL…FSAL, and KWLA…YGYI.

Belongs to the TVP23 family.

It is found in the membrane. In Mus musculus (Mouse), this protein is Golgi apparatus membrane protein TVP23 homolog B (Tvp23b).